The chain runs to 340 residues: MSEKNAYAKSGVDVEAGYEVVERIKKHVARTERAGVMGVLGGFGGMFDLSKTGVKEPVLVSGTDGVGTKLMLAIKYDKHDTIGQDCVAMCVNDIIAAGAEPLYFLDYIATGKNNPVKLEEVVSGVAEGCVQAGVALIGGETAEMPGMYGEDDYDLAGFAVGVAEKSQIIDGSKVKEGDILLGLASSGIHSNGYSLVRRVFADYTGKELLPELEGKQLKDVLLEPTRIYVKAALPLIKEELVNGIGHITGGGFIENVPRMFADDLAAEIDEDKVPVLPIFKALEKYGDIKHEEMFEIFNMGVGLMLAVSPENVNRVKELLDEPVYEIGRIIKKADASVVIK.

The protein belongs to the AIR synthase family.

Its subcellular location is the cytoplasm. The enzyme catalyses 2-formamido-N(1)-(5-O-phospho-beta-D-ribosyl)acetamidine + ATP = 5-amino-1-(5-phospho-beta-D-ribosyl)imidazole + ADP + phosphate + H(+). It participates in purine metabolism; IMP biosynthesis via de novo pathway; 5-amino-1-(5-phospho-D-ribosyl)imidazole from N(2)-formyl-N(1)-(5-phospho-D-ribosyl)glycinamide: step 2/2. The sequence is that of Phosphoribosylformylglycinamidine cyclo-ligase from Streptococcus pyogenes serotype M3 (strain ATCC BAA-595 / MGAS315).